The sequence spans 114 residues: Putative protein TfaS (114 aa).

The protein belongs to the tfa family.

The sequence is that of Putative protein TfaS (tfaS) from Escherichia coli (strain K12).